The sequence spans 273 residues: Ciliary microtubule inner protein 2B (273 aa).

2 disordered regions span residues 59–85 and 123–164; these read TLLPPIQSPRSPVISKGRLPPRRGHER and RHGE…HASP. Basic and acidic residues predominate over residues 123–159; it reads RHGEQESHQLPDGAKGEREVEEDQLREAEEPPLKQEL.

The protein belongs to the CIMIP2 family. Microtubule inner protein component of sperm flagellar doublet microtubules. As to expression, expressed in airway epithelial cells.

The protein resides in the cytoplasm. The protein localises to the cytoskeleton. It localises to the cilium axoneme. Its subcellular location is the flagellum axoneme. Functionally, microtubule inner protein (MIP) part of the dynein-decorated doublet microtubules (DMTs) in cilia axoneme, which is required for motile cilia beating. In Mus musculus (Mouse), this protein is Ciliary microtubule inner protein 2B (Cimip2b).